The chain runs to 1221 residues: MIPTSKGKNTKTQPPLSRMTRDELEDSLFRLREEHMLVKELFWKQQDEIKRMRTALLRLTASGRGLRAEAAADESSGSPLNGGGTESGGTAPSSTSVPRCPGSSCSSSAWAPLLPAAPSLASTRDTDSSTPPGHRAEKPKRESRDRLSYTAPPTFKEHVTNEKARGEVASEPSELGHLMTSDTMQVEEPPKSPEKMWSKDENFAQRSSLESTQKATELRASIKENIQLIRLKKLLHERNTSLAVTKAQLTEVQAAYETLLHKNQGILGAAHNALLSQVNELRAELKEESKKAVSLKSQMEDVSILQITLKEFQERVEDLEKERKLLNDNYDKLLESMLDSSNQPQWSHELGEQLQQKVSQLQDQLDVEMKEKREILLQLSQEKAQNKDLELEVTSLLQKHKQEVEDLQNISTFSQSPDRQSAPATHPALFQETIQIQPCEPKNQEEKKLSQMLSELQVSHAETTLELEKTRDMLILQRKINVCYQEELEAMMTKADNENKDHEAKLERLNQLLDLKNKRINQLEEQLKDVAYGTRQLPLCLKPLPAHENEDKVDISPWHQSENLFELHIHQAFLTSAALAQAGDTQPTTFCTYSFYDFETHCTPLVVGPQPLYDFTSQYVVEIDSLFLHYLQGASAQLDLHQAIASEHHTLAAGWICFDRVLETVERVHGSATLTGTGGEVFGVLEYWMRLRFPIRSSLQAYNKRKKAQAYLAANVLGAWEAQKDEPRSGTWKNQNELRVEIIRCCGLRSRSLGAQPSPYVMYRFFTFSDHDTTIIPASSNPYFRDLARFPVLVTSDLDQYLRREALSVYVFDDEDSEPGSYLGRVQVPLLPLAQNKSIQGDFNLTDPVGEPNGSVQVHLDWGSCYLPPENFPKPEAQSEEDTRDGLETSIEEEEASFPPQDQMVSIDTPTEAGQYQAKRKPPQVGERKEREHQVAGYSRRKHGRKTGLQGKNRMEYLSHNLLNGNTLQQVKYIEWKFSGLKISADHVLKNQQKEEEMTSSYSAQILKETPHPVNDKEFCEQASEGSEAQTTDSDEIVTPVSQKCPKADSEKMCIEIVSLAFYPEAEVMCDENVEQVYVEYRFYDLPLSETETPVSLRKPRAGEEIYFHFSKVIDLDPVEQKERRQFLFTMLIGEDPEQGHLKFTVVSDPIEEEKKECQEVGYAYLELWPMLVSGRDILEQDLDIVGPEDQATPIGKLKVSLQAAAALQAIYKEMTEDLCS.

2 stretches are compositionally biased toward polar residues: residues M1 to P15 and G88 to V97. Disordered regions lie at residues M1–D22, A68–S107, and S119–M196. Composition is skewed to basic and acidic residues over residues H134 to L147 and F155 to V168. Residues L267 to G533 adopt a coiled-coil conformation. One can recognise a C2 domain in the interval Q723–F843. The disordered stretch occupies residues P869–T947. The segment covering Q903 to G914 has biased composition (polar residues). An interaction with RPGR region spans residues S1027–T1216.

It belongs to the RPGRIP1 family. In terms of assembly, forms homodimers and elongated homopolymers. Interacts with NPHP4. Interacts with NEK4. Interacts with RPGR. Interacts with SPATA7. Interacts with CEP290/NPHP6; mediating the association between RPGR and CEP290/NPHP6. Retina, brain, skeletal muscle and kidney. Colocalizes with RGPR in the outer segment of rod photoreceptors and cone outer segments.

It is found in the cell projection. It localises to the cilium. In terms of biological role, may function as scaffolding protein. Required for normal location of RPGR at the connecting cilium of photoreceptor cells. Required for normal disk morphogenesis and disk organization in the outer segment of photoreceptor cells and for survival of photoreceptor cells. The polypeptide is X-linked retinitis pigmentosa GTPase regulator-interacting protein 1 (RPGRIP1) (Bos taurus (Bovine)).